Consider the following 118-residue polypeptide: UPF0342 protein BT9727_0768 (118 aa).

This sequence belongs to the UPF0342 family.

This chain is UPF0342 protein BT9727_0768, found in Bacillus thuringiensis subsp. konkukian (strain 97-27).